The sequence spans 240 residues: 4-hydroxy-tetrahydrodipicolinate reductase (240 aa).

NAD(+)-binding positions include 79-81 and 103-106; these read ATT and SANM. Residue H135 is the Proton donor/acceptor of the active site. (S)-2,3,4,5-tetrahydrodipicolinate is bound at residue H136. Catalysis depends on K139, which acts as the Proton donor. 145–146 is a (S)-2,3,4,5-tetrahydrodipicolinate binding site; the sequence is GT.

It belongs to the DapB family.

The protein localises to the cytoplasm. It carries out the reaction (S)-2,3,4,5-tetrahydrodipicolinate + NAD(+) + H2O = (2S,4S)-4-hydroxy-2,3,4,5-tetrahydrodipicolinate + NADH + H(+). It catalyses the reaction (S)-2,3,4,5-tetrahydrodipicolinate + NADP(+) + H2O = (2S,4S)-4-hydroxy-2,3,4,5-tetrahydrodipicolinate + NADPH + H(+). It functions in the pathway amino-acid biosynthesis; L-lysine biosynthesis via DAP pathway; (S)-tetrahydrodipicolinate from L-aspartate: step 4/4. Catalyzes the conversion of 4-hydroxy-tetrahydrodipicolinate (HTPA) to tetrahydrodipicolinate. This chain is 4-hydroxy-tetrahydrodipicolinate reductase, found in Staphylococcus aureus (strain USA300).